Consider the following 371-residue polypeptide: MELSEIKRNLEEYQNHLNQIRGSLDLENKETNIQEYEEMMTDPDFWNDQTKAQDIIDKNNALKSIVNGYYQLTNAVDDMSATRELLQEEYDEDMKIELEEEVQQFEEQIDQYELQLLLDGPHDANNAILELHPGAGGTESQDWVSMLLRMYQRYCEQNGFKVETVDYLPGDEAGVKSVTLLIKGHNAYGYLKAEKGVHRLVRISPFDSSGRRHTSFASCDVIPDFNNDEIEIEINPDDITVDTFRASGAGGQHINKTESAIRITHHPTGIVVNNQNERSQIKNREAAMKMLKSKLYQLKLEEQEQEMAEIRGEQKDIGWGSQIRSYVFHPYSMIKDHRTNEETGKVDAVMDGEIGPFIEAYLRKEMDSRDV.

Glutamine 252 carries the post-translational modification N5-methylglutamine.

The protein belongs to the prokaryotic/mitochondrial release factor family. Post-translationally, methylated by PrmC. Methylation increases the termination efficiency of RF2.

Its subcellular location is the cytoplasm. In terms of biological role, peptide chain release factor 2 directs the termination of translation in response to the peptide chain termination codons UGA and UAA. This Staphylococcus epidermidis (strain ATCC 35984 / DSM 28319 / BCRC 17069 / CCUG 31568 / BM 3577 / RP62A) protein is Peptide chain release factor 2.